A 365-amino-acid polypeptide reads, in one-letter code: Phospho-N-acetylmuramoyl-pentapeptide-transferase (365 aa).

Transmembrane regions (helical) follow at residues 22–42 (YVSVRIIMISITSLLITLFLG), 74–94 (TMGGVLILSSVIISALLWGSL), 95–115 (SSIYLWILILVVIFFGAIGFF), 134–154 (KFALQSIFSIILAIVLFYLLS), 169–189 (LHIPMGIFLFVVLTFFIINGS), 201–221 (GLAIVPVVLVAAGLGIYAYIQ), 240–260 (LAEVAVFCAALCGSGLAFLWF), 268–288 (FMGDVGSLTLGAVLGVIAVMI), 292–312 (LIFFIMGLLFVVEALSVMLQV), and 342–362 (KVVIRFWIVSLILFLIGLVAI).

This sequence belongs to the glycosyltransferase 4 family. MraY subfamily. Mg(2+) serves as cofactor.

It localises to the cell inner membrane. The catalysed reaction is UDP-N-acetyl-alpha-D-muramoyl-L-alanyl-gamma-D-glutamyl-meso-2,6-diaminopimeloyl-D-alanyl-D-alanine + di-trans,octa-cis-undecaprenyl phosphate = di-trans,octa-cis-undecaprenyl diphospho-N-acetyl-alpha-D-muramoyl-L-alanyl-D-glutamyl-meso-2,6-diaminopimeloyl-D-alanyl-D-alanine + UMP. It participates in cell wall biogenesis; peptidoglycan biosynthesis. Its function is as follows. Catalyzes the initial step of the lipid cycle reactions in the biosynthesis of the cell wall peptidoglycan: transfers peptidoglycan precursor phospho-MurNAc-pentapeptide from UDP-MurNAc-pentapeptide onto the lipid carrier undecaprenyl phosphate, yielding undecaprenyl-pyrophosphoryl-MurNAc-pentapeptide, known as lipid I. This Francisella philomiragia subsp. philomiragia (strain ATCC 25017 / CCUG 19701 / FSC 153 / O#319-036) protein is Phospho-N-acetylmuramoyl-pentapeptide-transferase.